The sequence spans 448 residues: Probable glycine dehydrogenase (decarboxylating) subunit 1 (448 aa).

This sequence belongs to the GcvP family. N-terminal subunit subfamily. In terms of assembly, the glycine cleavage system is composed of four proteins: P, T, L and H. In this organism, the P 'protein' is a heterodimer of two subunits.

It catalyses the reaction N(6)-[(R)-lipoyl]-L-lysyl-[glycine-cleavage complex H protein] + glycine + H(+) = N(6)-[(R)-S(8)-aminomethyldihydrolipoyl]-L-lysyl-[glycine-cleavage complex H protein] + CO2. The glycine cleavage system catalyzes the degradation of glycine. The P protein binds the alpha-amino group of glycine through its pyridoxal phosphate cofactor; CO(2) is released and the remaining methylamine moiety is then transferred to the lipoamide cofactor of the H protein. The protein is Probable glycine dehydrogenase (decarboxylating) subunit 1 of Staphylococcus epidermidis (strain ATCC 35984 / DSM 28319 / BCRC 17069 / CCUG 31568 / BM 3577 / RP62A).